A 540-amino-acid chain; its full sequence is [Co(II) methylated amine-specific corrinoid protein] reductase (540 aa).

2 4Fe-4S ferredoxin-type domains span residues 471–500 (IILE…IVER) and 504–535 (RIAK…ITKL). 8 residues coordinate [4Fe-4S] cluster: Cys480, Cys483, Cys486, Cys490, Cys513, Cys518, Cys521, and Cys525.

Monomer. Requires [4Fe-4S] cluster as cofactor.

It catalyses the reaction 2 Co(II)-[methylamine-specific corrinoid protein] + AH2 + ATP + H2O = 2 Co(I)-[methylamine-specific corrinoid protein] + A + ADP + phosphate + 3 H(+). The catalysed reaction is 2 Co(II)-[dimethylamine-specific corrinoid protein] + AH2 + ATP + H2O = 2 Co(I)-[dimethylamine-specific corrinoid protein] + A + ADP + phosphate + 3 H(+). The enzyme catalyses 2 Co(II)-[trimethylamine-specific corrinoid protein] + AH2 + ATP + H2O = 2 Co(I)-[trimethylamine-specific corrinoid protein] + A + ADP + phosphate + 3 H(+). It functions in the pathway one-carbon metabolism; methanogenesis from methylamine. Its pathway is one-carbon metabolism; methanogenesis from dimethylamine. The protein operates within one-carbon metabolism; methanogenesis from trimethylamine. Its function is as follows. Reductase required for the activation of corrinoid-dependent methylamine methyltransferase reactions during methanogenesis. Mediates the ATP-dependent reduction of corrinoid proteins from the inactive cobalt(II) state to the active cobalt(I) state. Acts on the corrinoid proteins involved in methanogenesis from monomethylamine (MMA), dimethylamine (DMA) and trimethylamine (TMA), namely MtmC, MtbC and MttC, respectively. This Methanosarcina barkeri protein is [Co(II) methylated amine-specific corrinoid protein] reductase.